The sequence spans 692 residues: MMPGTGNTPANAWSAPRKLLVTSALPYANGSIHLGHMVEYVQSDIWVRFQKMQGHTVHYVCADDTHGTPIMLRAEKEGITPEELIRRVHAEHYADFSDFLVAFDNYYSTNSEENRELASQIYRALKANGKIATRTIEQYYDPVKHMFLPDRFIKGECPKCHAKDQYGDSCESCGTTYSPTELIAPYSAVSGAAPVRKETEHYFFKLSECEDFLRQWTRSGTLQPEAANKMGEWFASGLSDWDISRDAPYFGFEIPDAPGKYFYVWLDAPIGYMASFKDLATREGLDFDEYWKPDSQAELYHFIGKDILYFHALFWPATLKFSGYRQPTKVFAHGFLTVNGEKMSKSRGTFITARSYLDHVKNPEYLRYYYAAKLNGSMEDIDLNLEDFVARVNSDLVGKYVNIASRTAGFIAKRFDGKLGTVGENAVIAELRAAADSIRESFENRDTARAVRDIMALADKANAYVAEHAPWDMAKQPEQTAALHAVCSVALEMFRLLTLYLKPVLPGLAQAVEKFLKIDPLTWADIDRPLPAGHQIQAYQHLITRIDPKHVEAMVEANKESLQTHAAVVPEQKQVASEATPESVYISIDDFAKVDLRIARIANAEHVEGAEKLLRLSLDIGEERPRQVFAGIKSAYDPESLKGRLTVMVANLAPRKMKFGLSEGMVLAASDERGGPFILSPDSGAQPGMRVK.

The 'HIGH' region signature appears at 26–36 (PYANGSIHLGH). Zn(2+) is bound by residues Cys-157, Cys-160, Cys-170, and Cys-173. A 'KMSKS' region motif is present at residues 342–346 (KMSKS). Residue Lys-345 participates in ATP binding. The tRNA-binding domain occupies 590–692 (DFAKVDLRIA…SGAQPGMRVK (103 aa)).

This sequence belongs to the class-I aminoacyl-tRNA synthetase family. MetG type 1 subfamily. In terms of assembly, homodimer. The cofactor is Zn(2+).

The protein localises to the cytoplasm. The enzyme catalyses tRNA(Met) + L-methionine + ATP = L-methionyl-tRNA(Met) + AMP + diphosphate. Functionally, is required not only for elongation of protein synthesis but also for the initiation of all mRNA translation through initiator tRNA(fMet) aminoacylation. This is Methionine--tRNA ligase from Methylobacillus flagellatus (strain ATCC 51484 / DSM 6875 / VKM B-1610 / KT).